The sequence spans 401 residues: Argininosuccinate synthase (401 aa).

8–16 (AYSGGLDTS) is an ATP binding site. Tyrosine 87 provides a ligand contact to L-citrulline. Residue glycine 117 coordinates ATP. L-aspartate contacts are provided by threonine 119, asparagine 123, and aspartate 124. Residue asparagine 123 coordinates L-citrulline. Positions 127, 175, 259, and 271 each coordinate L-citrulline.

This sequence belongs to the argininosuccinate synthase family. Type 1 subfamily. In terms of assembly, homotetramer.

The protein localises to the cytoplasm. It catalyses the reaction L-citrulline + L-aspartate + ATP = 2-(N(omega)-L-arginino)succinate + AMP + diphosphate + H(+). It functions in the pathway amino-acid biosynthesis; L-arginine biosynthesis; L-arginine from L-ornithine and carbamoyl phosphate: step 2/3. The polypeptide is Argininosuccinate synthase (Paenarthrobacter aurescens (strain TC1)).